The sequence spans 301 residues: RNA polymerase II holoenzyme cyclin-like subunit (301 aa).

The Cyclin N-terminal domain occupies 53–142; the sequence is QQLIKLGKRM…LGECEFALIS (90 aa).

The protein belongs to the cyclin family. Cyclin C subfamily. Component of the srb8-11 complex, a regulatory module of the Mediator complex.

The protein resides in the nucleus. In terms of biological role, component of the srb8-11 complex. The srb8-11 complex is a regulatory module of the Mediator complex which is itself involved in regulation of basal and activated RNA polymerase II-dependent transcription. The srb8-11 complex may be involved in the transcriptional repression of a subset of genes regulated by Mediator. It may inhibit the association of the Mediator complex with RNA polymerase II to form the holoenzyme complex. The srb8-11 complex phosphorylates the C-terminal domain (CTD) of the largest subunit of RNA polymerase II. The chain is RNA polymerase II holoenzyme cyclin-like subunit (ssn8) from Aspergillus oryzae (strain ATCC 42149 / RIB 40) (Yellow koji mold).